A 158-amino-acid chain; its full sequence is NAD(P)H-quinone oxidoreductase subunit J, chloroplastic (158 aa).

It belongs to the complex I 30 kDa subunit family. As to quaternary structure, NDH is composed of at least 16 different subunits, 5 of which are encoded in the nucleus.

Its subcellular location is the plastid. The protein localises to the chloroplast thylakoid membrane. It catalyses the reaction a plastoquinone + NADH + (n+1) H(+)(in) = a plastoquinol + NAD(+) + n H(+)(out). It carries out the reaction a plastoquinone + NADPH + (n+1) H(+)(in) = a plastoquinol + NADP(+) + n H(+)(out). NDH shuttles electrons from NAD(P)H:plastoquinone, via FMN and iron-sulfur (Fe-S) centers, to quinones in the photosynthetic chain and possibly in a chloroplast respiratory chain. The immediate electron acceptor for the enzyme in this species is believed to be plastoquinone. Couples the redox reaction to proton translocation, and thus conserves the redox energy in a proton gradient. The polypeptide is NAD(P)H-quinone oxidoreductase subunit J, chloroplastic (Ranunculus macranthus (Large buttercup)).